A 472-amino-acid chain; its full sequence is FAD-linked oxidoreductase azaL (472 aa).

The signal sequence occupies residues methionine 1 to alanine 18. N-linked (GlcNAc...) asparagine glycosylation is found at asparagine 22, asparagine 44, asparagine 102, asparagine 123, asparagine 227, asparagine 246, asparagine 273, asparagine 305, asparagine 318, asparagine 390, and asparagine 415. Residues threonine 54–alanine 228 enclose the FAD-binding PCMH-type domain.

It belongs to the oxygen-dependent FAD-linked oxidoreductase family.

Its pathway is secondary metabolite biosynthesis. Functionally, FAD-linked oxidoreductase; part of the gene cluster that mediates the biosynthesis of azaphilones, a class of fungal metabolites characterized by a highly oxygenated pyrano-quinone bicyclic core and exhibiting a broad range of bioactivities. In the first step, the non-reducing polyketide synthase azaA forms the hexaketide precursor from successive condensations of five malonyl-CoA units, presumably with a simple acetyl-CoA starter unit. The reactive polyketide chain then undergoes a PT-mediated C2-C7 cyclization to afford the aromatic ring and is eventually released as an aldehyde through the R-domain. The putative ketoreductase azaE is proposed to catalyze the reduction of the terminal ketone resulting in the early culture product FK17-P2a. The monooxygenase azaH was demonstrated to be the only enzyme required to convert FK17-P2a to azanigerone E. AzaH first hydroxylates the benzaldehyde intermediate FK17-P2a at C4, which triggers the formation of the pyran-ring to afford azanigerone E. In parallel, the 2,4-dimethylhexanoyl chain is synthesized by the HR-PKS azaB and is proposed to be transferred to the C4-hydroxyl of azanigerone E by the acyltransferase azaD directly from the ACP domain of azaB. Alternatively, the 2,4-dimethyl-hexanoyl chain may be offloaded from the HR-PKS as a carboxylic acid and converted to an acyl-CoA by azaF. The resulting acyl-CoA molecule could then be taken up as a substrate by AzaD to form azanigerone B. To yield the carboxylic acid substituent in azanigerone A, the hydroxypropyl side chain of azanigerone B would need to undergo a C-C oxidative cleavage catalyzed by cytochrome P450 AzaI. AzaI is proposed to act on a vicinal diol that leads to a C-C bond scission either through an alkoxyradical intermediate or a peroxy complex. In the biosynthesis of azanigerone A, azanigerone B first undergoes hydroxylation at C10, possibly catalyzed by one of the two FAD-dependent monooxygenases encoded in the cluster, azaG or azaL, resulting in the vicinal diol azanigerone C. Oxidative cleavage of azanigerone C by azaI would yield the corresponding aldehyde derivative of azanigerone A. Finally, the dehydrogenase azaJ is proposed to convert the aldehyde functional group into the carboxylic acid, completing the conversion from azanigerone B to azanigerone A. Alternatively, the oxidation of aldehyde to carboxylic acid may be catalyzed by the same P450 enzyme azaI via consecutive oxidation or by endogenous alcohol dehydrogenase. The polypeptide is FAD-linked oxidoreductase azaL (Aspergillus niger (strain ATCC 1015 / CBS 113.46 / FGSC A1144 / LSHB Ac4 / NCTC 3858a / NRRL 328 / USDA 3528.7)).